Consider the following 747-residue polypeptide: MEYTHQSSWIIPFTPLPVPILIGVGLLLFPTATKNLRRMWAFPSIFLLIIVMIFSVDLSIHQIKNSSIYQYVWSWTINTDLSLEFGYLIDSLTSIMSILITTVGILVLIYSDNYMSHDQGYLRFFAYLSFFNTSMLGLVTSSNLIQVYIFWELVGMCSYLLIGFWFTRPIAANACQKAFVTNRVGDFGLLLGILGLYWITGSLEFRDLFQIINNLIDQNEVNIFFITLCALLLFCGSVAKSAQFPLHVWLPDAMEGPTPISALIHAATMVAAGIFLVARLLPFFIAIPSIMNGIAFIGIITVVLGATLAIAQKDIKKNLAYSTMSQLGYMMLALGMGSYRIALFHLITHAYSKALLFLGSGSIIHSMEAIVGYSPNKSQNMLLMGGLTKHVPITKTAFLIGTLSLCGIPPFACFWSKDEILNDSWLYSPIFAIIACSTAGLTAFYMFRIYLLVFEGYFNVHFQNFNGKKNSSFYSISLWGKEGKKKLKNKIHLLSLLTMNNNERTSLFRKRAYLSKINRNVKSITRLFIHSTYFGTKKFPCFYPHESDNTMLFSMLVLVLFTFFVGAIGISFNQEGIDLDILSKLLSPSIDLLHQNSNKSVDWYEFFTNATFSVSIAFFGIFIASFFYKPVYSTLQNLNLLNLFEKNLTKNILADTIINGIYDWSYNRGYIDGFYEISLIASVRKLAKLNSFFDRQVIDGIPNAVGITSFLIGEAFKYVGSGRISSYILFFVFFVLLFLIIFYSFFI.

16 helical membrane passes run 9 to 29 (WIIPFTPLPVPILIGVGLLLF), 40 to 60 (WAFPSIFLLIIVMIFSVDLSI), 89 to 109 (IDSLTSIMSILITTVGILVLI), 125 to 145 (FAYLSFFNTSMLGLVTSSNLI), 147 to 167 (VYIFWELVGMCSYLLIGFWFT), 185 to 205 (GDFGLLLGILGLYWITGSLEF), 219 to 239 (NEVNIFFITLCALLLFCGSVA), 258 to 278 (TPISALIHAATMVAAGIFLVA), 280 to 300 (LLPFFIAIPSIMNGIAFIGII), 327 to 347 (LGYMMLALGMGSYRIALFHLI), 354 to 374 (ALLFLGSGSIIHSMEAIVGYS), 396 to 416 (TAFLIGTLSLCGIPPFACFWS), 425 to 445 (WLYSPIFAIIACSTAGLTAFY), 552 to 572 (LFSMLVLVLFTFFVGAIGISF), 606 to 626 (FFTNATFSVSIAFFGIFIASF), and 727 to 747 (YILFFVFFVLLFLIIFYSFFI).

Belongs to the complex I subunit 5 family. As to quaternary structure, NDH is composed of at least 16 different subunits, 5 of which are encoded in the nucleus.

It is found in the plastid. The protein resides in the chloroplast thylakoid membrane. The catalysed reaction is a plastoquinone + NADH + (n+1) H(+)(in) = a plastoquinol + NAD(+) + n H(+)(out). The enzyme catalyses a plastoquinone + NADPH + (n+1) H(+)(in) = a plastoquinol + NADP(+) + n H(+)(out). In terms of biological role, NDH shuttles electrons from NAD(P)H:plastoquinone, via FMN and iron-sulfur (Fe-S) centers, to quinones in the photosynthetic chain and possibly in a chloroplast respiratory chain. The immediate electron acceptor for the enzyme in this species is believed to be plastoquinone. Couples the redox reaction to proton translocation, and thus conserves the redox energy in a proton gradient. The sequence is that of NAD(P)H-quinone oxidoreductase subunit 5, chloroplastic (ndhF) from Lotus japonicus (Lotus corniculatus var. japonicus).